A 230-amino-acid chain; its full sequence is Biosynthetic peptidoglycan transglycosylase (230 aa).

A helical transmembrane segment spans residues 11-31 (VLLVLVALFVLYQLWIFTLVL).

The protein belongs to the glycosyltransferase 51 family.

The protein localises to the cell inner membrane. It catalyses the reaction [GlcNAc-(1-&gt;4)-Mur2Ac(oyl-L-Ala-gamma-D-Glu-L-Lys-D-Ala-D-Ala)](n)-di-trans,octa-cis-undecaprenyl diphosphate + beta-D-GlcNAc-(1-&gt;4)-Mur2Ac(oyl-L-Ala-gamma-D-Glu-L-Lys-D-Ala-D-Ala)-di-trans,octa-cis-undecaprenyl diphosphate = [GlcNAc-(1-&gt;4)-Mur2Ac(oyl-L-Ala-gamma-D-Glu-L-Lys-D-Ala-D-Ala)](n+1)-di-trans,octa-cis-undecaprenyl diphosphate + di-trans,octa-cis-undecaprenyl diphosphate + H(+). The protein operates within cell wall biogenesis; peptidoglycan biosynthesis. Functionally, peptidoglycan polymerase that catalyzes glycan chain elongation from lipid-linked precursors. The protein is Biosynthetic peptidoglycan transglycosylase of Aromatoleum aromaticum (strain DSM 19018 / LMG 30748 / EbN1) (Azoarcus sp. (strain EbN1)).